The following is a 166-amino-acid chain: Putative 4-hydroxy-4-methyl-2-oxoglutarate aldolase (166 aa).

Substrate contacts are provided by residues 74-77 (GDQI) and Arg96. Residue Asp97 coordinates a divalent metal cation.

This sequence belongs to the class II aldolase/RraA-like family. As to quaternary structure, homotrimer. The cofactor is a divalent metal cation.

It carries out the reaction 4-hydroxy-4-methyl-2-oxoglutarate = 2 pyruvate. The enzyme catalyses oxaloacetate + H(+) = pyruvate + CO2. Its function is as follows. Catalyzes the aldol cleavage of 4-hydroxy-4-methyl-2-oxoglutarate (HMG) into 2 molecules of pyruvate. Also contains a secondary oxaloacetate (OAA) decarboxylase activity due to the common pyruvate enolate transition state formed following C-C bond cleavage in the retro-aldol and decarboxylation reactions. The chain is Putative 4-hydroxy-4-methyl-2-oxoglutarate aldolase from Xanthomonas campestris pv. campestris (strain 8004).